Reading from the N-terminus, the 383-residue chain is Probable arabinan endo-1,5-alpha-L-arabinosidase D (383 aa).

Residues 1-22 form the signal peptide; the sequence is MVHITLPGLLLCLCLYLSVAPA. D49 serves as the catalytic Proton acceptor. N-linked (GlcNAc...) asparagine glycosylation is found at N75, N163, and N206. The Proton donor role is filled by E227. N-linked (GlcNAc...) asparagine glycosylation occurs at N325. The GPI-anchor amidated asparagine moiety is linked to residue N356. A propeptide spans 357–383 (removed in mature form); sequence PGNSLQPPSSVSLQIVAFLCLVILFTL.

The protein belongs to the glycosyl hydrolase 43 family.

The protein resides in the cell membrane. It carries out the reaction Endohydrolysis of (1-&gt;5)-alpha-arabinofuranosidic linkages in (1-&gt;5)-arabinans.. Its pathway is glycan metabolism; L-arabinan degradation. In terms of biological role, endo-1,5-alpha-L-arabinanase involved in degradation of pectin. Its preferred substrate is linear 1,5-alpha-L-arabinan. This Emericella nidulans (strain FGSC A4 / ATCC 38163 / CBS 112.46 / NRRL 194 / M139) (Aspergillus nidulans) protein is Probable arabinan endo-1,5-alpha-L-arabinosidase D (abnD).